The chain runs to 305 residues: tRNA dimethylallyltransferase (305 aa).

Residue 8-15 participates in ATP binding; the sequence is GPTASGKT. 10–15 is a binding site for substrate; the sequence is TASGKT. The segment at 33-36 is interaction with substrate tRNA; sequence DSQQ.

The protein belongs to the IPP transferase family. In terms of assembly, monomer. Mg(2+) serves as cofactor.

The enzyme catalyses adenosine(37) in tRNA + dimethylallyl diphosphate = N(6)-dimethylallyladenosine(37) in tRNA + diphosphate. Functionally, catalyzes the transfer of a dimethylallyl group onto the adenine at position 37 in tRNAs that read codons beginning with uridine, leading to the formation of N6-(dimethylallyl)adenosine (i(6)A). The chain is tRNA dimethylallyltransferase from Anaeromyxobacter dehalogenans (strain 2CP-1 / ATCC BAA-258).